A 1157-amino-acid chain; its full sequence is ATP-dependent helicase/deoxyribonuclease subunit B (1157 aa).

Residues 1–278 form the UvrD-like helicase ATP-binding domain; the sequence is MTLQIIAGRS…FFLENKRAKT (278 aa). Position 8–15 (8–15) interacts with ATP; that stretch reads GRSGTGKT. Residues 272 to 590 form the UvrD-like helicase C-terminal domain; that stretch reads ENKRAKTESL…VLSDMENAKL (319 aa). Positions 794, 1115, 1118, and 1124 each coordinate [4Fe-4S] cluster.

This sequence belongs to the helicase family. AddB/RexB type 1 subfamily. Heterodimer of AddA and AddB. Mg(2+) serves as cofactor. The cofactor is [4Fe-4S] cluster.

The heterodimer acts as both an ATP-dependent DNA helicase and an ATP-dependent, dual-direction single-stranded exonuclease. Recognizes the chi site generating a DNA molecule suitable for the initiation of homologous recombination. The AddB subunit has 5' -&gt; 3' nuclease activity but not helicase activity. This Listeria monocytogenes serotype 4a (strain HCC23) protein is ATP-dependent helicase/deoxyribonuclease subunit B.